The chain runs to 118 residues: MYRNIVFYLILLCLFISVVMKSFEVIRTIANVICFIFVLLYFKDEMKTYSRKALAILSICFLFLVGICAFIILQGQTLMKRHLFFTGLETIAGILLIIVSLSICTFILRKISNRLKRM.

4 helical membrane-spanning segments follow: residues I5–M20, V25–F42, A53–L73, and L83–I103.

It is found in the cell membrane. This is an uncharacterized protein from Bacillus subtilis (strain 168).